We begin with the raw amino-acid sequence, 111 residues long: Disintegrin piscivostatin-alpha (111 aa).

Positions 1–20 are cleaved as a signal peptide; the sequence is MIQVLLVTICLAVFPYQGSS. Positions 21–44 are excised as a propeptide; sequence IILESGNVNDYEVVYPRKITPLPK. Positions 45–111 constitute a Disintegrin domain; the sequence is GAVQPKNPCC…GDCPRKHFYA (67 aa). Intrachain disulfides connect Cys-53–Cys-76, Cys-67–Cys-73, Cys-72–Cys-97, and Cys-85–Cys-104. The short motif at 89-91 is the Cell attachment site element; sequence RGD. Residues 110-111 constitute a propeptide that is removed on maturation; it reads YA.

It belongs to the disintegrin family. Dimeric disintegrin subfamily. In terms of assembly, heterodimer with piscivostatin-beta; disulfide-linked. In terms of tissue distribution, expressed by the venom gland.

The protein resides in the secreted. In terms of biological role, inhibits fibrinogen interaction with platelets. Acts by binding to alpha-IIb/beta-3 (ITGA2B/ITGB3) on the platelet surface and inhibits both ADP-induced platelet aggregation and platelet aggregate dissociation in human platelet-rich plasma. The protein is Disintegrin piscivostatin-alpha of Agkistrodon piscivorus piscivorus (Eastern cottonmouth).